Reading from the N-terminus, the 458-residue chain is tRNA-2-methylthio-N(6)-dimethylallyladenosine synthase (458 aa).

The MTTase N-terminal domain maps to 3–120; that stretch reads QKLYIETFGC…LPSMLEQVRC (118 aa). [4Fe-4S] cluster contacts are provided by C12, C49, C83, C157, C161, and C164. Residues 143–375 enclose the Radical SAM core domain; it reads RADGPKAFVS…QAKIADNAAK (233 aa). Residues 378–441 enclose the TRAM domain; it reads ASMVGSIQSV…PNSLRGRLIG (64 aa).

Belongs to the methylthiotransferase family. MiaB subfamily. As to quaternary structure, monomer. [4Fe-4S] cluster serves as cofactor.

It is found in the cytoplasm. It catalyses the reaction N(6)-dimethylallyladenosine(37) in tRNA + (sulfur carrier)-SH + AH2 + 2 S-adenosyl-L-methionine = 2-methylsulfanyl-N(6)-dimethylallyladenosine(37) in tRNA + (sulfur carrier)-H + 5'-deoxyadenosine + L-methionine + A + S-adenosyl-L-homocysteine + 2 H(+). Functionally, catalyzes the methylthiolation of N6-(dimethylallyl)adenosine (i(6)A), leading to the formation of 2-methylthio-N6-(dimethylallyl)adenosine (ms(2)i(6)A) at position 37 in tRNAs that read codons beginning with uridine. This is tRNA-2-methylthio-N(6)-dimethylallyladenosine synthase from Methylococcus capsulatus (strain ATCC 33009 / NCIMB 11132 / Bath).